We begin with the raw amino-acid sequence, 245 residues long: tRNA (guanine-N(7)-)-methyltransferase (245 aa).

Positions 75, 100, 127, and 149 each coordinate S-adenosyl-L-methionine. Residue Asp149 is part of the active site. Residues Lys153, Asp185, and 222–225 (TKFE) contribute to the substrate site.

The protein belongs to the class I-like SAM-binding methyltransferase superfamily. TrmB family.

The enzyme catalyses guanosine(46) in tRNA + S-adenosyl-L-methionine = N(7)-methylguanosine(46) in tRNA + S-adenosyl-L-homocysteine. It participates in tRNA modification; N(7)-methylguanine-tRNA biosynthesis. Functionally, catalyzes the formation of N(7)-methylguanine at position 46 (m7G46) in tRNA. The sequence is that of tRNA (guanine-N(7)-)-methyltransferase from Acinetobacter baylyi (strain ATCC 33305 / BD413 / ADP1).